The primary structure comprises 607 residues: CUB and zona pellucida-like domain-containing protein 1 (607 aa).

The first 19 residues, 1–19 (MEVTGRLFIWAILAVSCGA), serve as a signal peptide directing secretion. The cysteines at positions 17 and 58 are disulfide-linked. CUB domains lie at 20–146 (QLNS…YFFS) and 154–265 (CGGD…YTSI). The Lumenal segment spans residues 20–568 (QLNSTEAEGK…AEISNQPLSR (549 aa)). N-linked (GlcNAc...) asparagine glycans are attached at residues Asn-22, Asn-57, and Asn-67. 3 disulfides stabilise this stretch: Cys-85-Cys-107, Cys-154-Cys-180, and Cys-207-Cys-229. Positions 276 to 519 (SCVSDKMRVI…SRCNQGCVPR (244 aa)) constitute a ZP domain. N-linked (GlcNAc...) asparagine glycosylation is present at Asn-419. Residues Cys-442 and Cys-498 are joined by a disulfide bond. The chain crosses the membrane as a helical span at residues 569–589 (LYLFSFMVLALNVVIVAITTV). Topologically, residues 590 to 607 (KHFLNRWMDHRYQKLQVY) are cytoplasmic.

Highly expressed in pancreatic acinar cells. Also expressed in epithelium of the uterus during late pregnancy but not detected in non-pregnant uterus or in a variety of other adult and fetal tissues.

The protein resides in the zymogen granule membrane. Functionally, localized to zymogen granules, where it functions in trypsinogen activation. May indirectly regulate cell motility, cell-cell and cell/extracellular matrix interactions. The sequence is that of CUB and zona pellucida-like domain-containing protein 1 from Mus musculus (Mouse).